A 509-amino-acid polypeptide reads, in one-letter code: ATP synthase subunit alpha (509 aa).

169–176 contacts ATP; it reads GDRQTGKT.

The protein belongs to the ATPase alpha/beta chains family. As to quaternary structure, F-type ATPases have 2 components, CF(1) - the catalytic core - and CF(0) - the membrane proton channel. CF(1) has five subunits: alpha(3), beta(3), gamma(1), delta(1), epsilon(1). CF(0) has three main subunits: a(1), b(2) and c(9-12). The alpha and beta chains form an alternating ring which encloses part of the gamma chain. CF(1) is attached to CF(0) by a central stalk formed by the gamma and epsilon chains, while a peripheral stalk is formed by the delta and b chains.

It localises to the cell inner membrane. It catalyses the reaction ATP + H2O + 4 H(+)(in) = ADP + phosphate + 5 H(+)(out). Produces ATP from ADP in the presence of a proton gradient across the membrane. The alpha chain is a regulatory subunit. The protein is ATP synthase subunit alpha of Brucella abortus (strain S19).